Here is a 338-residue protein sequence, read N- to C-terminus: Glycerol-3-phosphate dehydrogenase [NAD(P)+] (338 aa).

NADPH-binding residues include Ser14, Tyr15, His35, and Lys109. Positions 109, 138, and 140 each coordinate sn-glycerol 3-phosphate. Ala142 lines the NADPH pocket. Sn-glycerol 3-phosphate is bound by residues Lys194, Asp247, Ser257, Arg258, and Asn259. Catalysis depends on Lys194, which acts as the Proton acceptor. Arg258 is an NADPH binding site. NADPH contacts are provided by Val282 and Glu284.

The protein belongs to the NAD-dependent glycerol-3-phosphate dehydrogenase family.

The protein resides in the cytoplasm. It carries out the reaction sn-glycerol 3-phosphate + NAD(+) = dihydroxyacetone phosphate + NADH + H(+). The enzyme catalyses sn-glycerol 3-phosphate + NADP(+) = dihydroxyacetone phosphate + NADPH + H(+). It participates in membrane lipid metabolism; glycerophospholipid metabolism. Functionally, catalyzes the reduction of the glycolytic intermediate dihydroxyacetone phosphate (DHAP) to sn-glycerol 3-phosphate (G3P), the key precursor for phospholipid synthesis. The polypeptide is Glycerol-3-phosphate dehydrogenase [NAD(P)+] (Shewanella sp. (strain MR-4)).